A 1578-amino-acid chain; its full sequence is Neurexin-3 (1578 aa).

Positions 1–27 are cleaved as a signal peptide; the sequence is MSFTLHSVFFTLKVSSFLGSLVGLCLG. The region spanning 28–202 is the Laminin G-like 1 domain; the sequence is LEFMGLPNQW…SVQLEAEGPC (175 aa). The Extracellular portion of the chain corresponds to 28-1503; that stretch reads LEFMGLPNQW…EVIRESNSTT (1476 aa). N-linked (GlcNAc...) asparagine glycans are attached at residues asparagine 58 and asparagine 105. One can recognise an EGF-like 1 domain in the interval 198 to 235; the sequence is AEGPCGERPCENGGICFLLDGHPTCDCSTTGYGGTLCS. 3 cysteine pairs are disulfide-bonded: cysteine 202-cysteine 213, cysteine 207-cysteine 222, and cysteine 224-cysteine 234. Laminin G-like domains are found at residues 260-444 and 451-643; these read ENVA…VFKC and DPIN…KSSC. Residues aspartate 308, leucine 325, and methionine 378 each contribute to the Ca(2+) site. Intrachain disulfides connect cysteine 408–cysteine 444, cysteine 614–cysteine 643, cysteine 651–cysteine 662, cysteine 656–cysteine 671, and cysteine 673–cysteine 683. Residues 647–684 form the EGF-like 2 domain; it reads SAKQCDSYPCKNNAVCKDGWNRFICDCTGTGYWGRTCE. Laminin G-like domains follow at residues 689-861 and 875-1050; these read ILSY…IDYC and DPVT…DRGC. Ca(2+) is bound by residues aspartate 736 and leucine 753. An N-linked (GlcNAc...) asparagine glycan is attached at asparagine 761. Arginine 811 serves as a coordination point for Ca(2+). Cystine bridges form between cysteine 1022–cysteine 1050, cysteine 1057–cysteine 1068, cysteine 1062–cysteine 1077, and cysteine 1079–cysteine 1089. Positions 1053-1090 constitute an EGF-like 3 domain; sequence PSTTCQEDSCANQGVCMQQWEGFTCDCSMTSYSGNQCN. The region spanning 1094-1294 is the Laminin G-like 6 domain; that stretch reads ATYIFGKSGG…NPNIKINGSV (201 aa). Positions 1146 and 1163 each coordinate Ca(2+). The N-linked (GlcNAc...) asparagine glycan is linked to asparagine 1193. Residues isoleucine 1245 and asparagine 1247 each coordinate Ca(2+). 2 N-linked (GlcNAc...) asparagine glycosylation sites follow: asparagine 1291 and asparagine 1335. The tract at residues 1328 to 1352 is disordered; the sequence is ATTTTRKNRSTASIQPTSDDLVSSA. The span at 1337-1352 shows a compositional bias: polar residues; the sequence is STASIQPTSDDLVSSA. The O-linked (Xyl...) (heparan sulfate) serine glycan is linked to serine 1351. An N-linked (GlcNAc...) asparagine glycan is attached at asparagine 1500. Residues 1504–1524 traverse the membrane as a helical segment; the sequence is GMVVGIVAAAALCILILLYAM. The Cytoplasmic portion of the chain corresponds to 1525 to 1578; the sequence is YKYRNRDEGSYQVDETRNYISNSAQSNGTLMKEKQASSKSGHKKQKNKDKEYYV. The tract at residues 1546–1578 is disordered; sequence NSAQSNGTLMKEKQASSKSGHKKQKNKDKEYYV.

This sequence belongs to the neurexin family. In terms of assembly, the laminin G-like domain 2 binds to NXPH1. Isoform 8/alpha-4B binds to alpha-dystroglycan. The cytoplasmic C-terminal region binds to CASK. Specific isoforms bind neuroligins NLGN1, NLGN2 and NLGN3. Interacts with CLSTN3. In terms of processing, O-glycosylated; contains heparan sulfate. Heparan sulfate attachment is required for synapse development by mediating interactions with neuroligins. In terms of tissue distribution, brain.

It is found in the presynaptic cell membrane. In terms of biological role, neuronal cell surface protein that may be involved in cell recognition and cell adhesion. May mediate intracellular signaling. The chain is Neurexin-3 (Nrxn3) from Rattus norvegicus (Rat).